The chain runs to 602 residues: Beta-(1--&gt;2)glucan export ATP-binding/permease protein NdvA (602 aa).

An ABC transmembrane type-1 domain is found at G21–M311. 6 helical membrane-spanning segments follow: residues W22 to F42, L68 to L88, E146 to W166, R167 to V187, L238 to A258, and I285 to F305. Positions V345–A579 constitute an ABC transporter domain. An ATP-binding site is contributed by G378 to S385.

Belongs to the ABC transporter superfamily. Beta-(1--&gt;2)glucan exporter (TC 3.A.1.108.1) family. In terms of assembly, homodimer.

The protein resides in the cell inner membrane. It carries out the reaction [(1-&gt;2)-beta-D-glucosyl](n)(in) + ATP + H2O = [(1-&gt;2)-beta-D-glucosyl](n)(out) + ADP + phosphate + H(+). Its function is as follows. Involved in Beta-(1--&gt;2)glucan export. Transmembrane domains (TMD) form a pore in the inner membrane and the ATP-binding domain (NBD) is responsible for energy generation. The sequence is that of Beta-(1--&gt;2)glucan export ATP-binding/permease protein NdvA from Rhodopseudomonas palustris (strain BisA53).